A 290-amino-acid chain; its full sequence is Glycine--tRNA ligase alpha subunit (290 aa).

This sequence belongs to the class-II aminoacyl-tRNA synthetase family. As to quaternary structure, tetramer of two alpha and two beta subunits.

It is found in the cytoplasm. The catalysed reaction is tRNA(Gly) + glycine + ATP = glycyl-tRNA(Gly) + AMP + diphosphate. The protein is Glycine--tRNA ligase alpha subunit of Synechococcus sp. (strain CC9902).